The primary structure comprises 356 residues: tRNA pseudouridine synthase D (356 aa).

The active-site Nucleophile is D84. A TRUD domain is found at 159–302; that stretch reads GVPNYYGPQR…RRGARRPIRV (144 aa).

The protein belongs to the pseudouridine synthase TruD family.

It carries out the reaction uridine(13) in tRNA = pseudouridine(13) in tRNA. In terms of biological role, responsible for synthesis of pseudouridine from uracil-13 in transfer RNAs. This chain is tRNA pseudouridine synthase D, found in Thermus thermophilus (strain ATCC 27634 / DSM 579 / HB8).